Here is a 116-residue protein sequence, read N- to C-terminus: Large ribosomal subunit protein bL19 (116 aa).

Belongs to the bacterial ribosomal protein bL19 family.

This protein is located at the 30S-50S ribosomal subunit interface and may play a role in the structure and function of the aminoacyl-tRNA binding site. The polypeptide is Large ribosomal subunit protein bL19 (Staphylococcus saprophyticus subsp. saprophyticus (strain ATCC 15305 / DSM 20229 / NCIMB 8711 / NCTC 7292 / S-41)).